Consider the following 349-residue polypeptide: ATPase GET3 (349 aa).

An ATP-binding site is contributed by 26–33 (KGGVGKTT). Residue Asp57 is part of the active site. ATP is bound by residues Glu240 and Asn267. Positions 280 and 283 each coordinate Zn(2+).

It belongs to the arsA ATPase family. As to quaternary structure, homodimer. Component of the Golgi to ER traffic (GET) complex, which is composed of GET1, GET2 and GET3. Within the complex, GET1 and GET2 form a heterotetramer which is stabilized by phosphatidylinositol binding and which binds to the GET3 homodimer. Interacts with the chloride channel protein GEF1.

It is found in the cytoplasm. The protein localises to the endoplasmic reticulum. The protein resides in the golgi apparatus. Its function is as follows. ATPase required for the post-translational delivery of tail-anchored (TA) proteins to the endoplasmic reticulum. Recognizes and selectively binds the transmembrane domain of TA proteins in the cytosol. This complex then targets to the endoplasmic reticulum by membrane-bound receptors GET1 and GET2, where the tail-anchored protein is released for insertion. This process is regulated by ATP binding and hydrolysis. ATP binding drives the homodimer towards the closed dimer state, facilitating recognition of newly synthesized TA membrane proteins. ATP hydrolysis is required for insertion. Subsequently, the homodimer reverts towards the open dimer state, lowering its affinity for the GET1-GET2 receptor, and returning it to the cytosol to initiate a new round of targeting. Cooperates with the HDEL receptor ERD2 to mediate the ATP-dependent retrieval of resident ER proteins that contain a C-terminal H-D-E-L retention signal from the Golgi to the ER. Involved in low-level resistance to the oxyanions arsenite and arsenate, and in heat tolerance. The protein is ATPase GET3 of Lachancea thermotolerans (strain ATCC 56472 / CBS 6340 / NRRL Y-8284) (Yeast).